Consider the following 416-residue polypeptide: Probable histone-binding protein lin-53 (416 aa).

WD repeat units lie at residues 118 to 158 (NHEG…SVPK), 170 to 210 (GHTK…GANG), 220 to 260 (GHES…PGHA), 263 to 303 (AHSA…LKLH), 307 to 347 (SHRD…EDQT), and 364 to 404 (GHTA…YNDV).

It belongs to the WD repeat RBAP46/RBAP48/MSI1 family. As to quaternary structure, binds directly to helix 1 of the histone fold of histone H4, a region that is not accessible when H4 is in chromatin. Probable component of a NuRD-like complex, composed of at least lin-53 and hda-1. Interacts with lin-35. Interacts with hda-1; the interaction is direct. Component of the DRM complex, at least composed of lin-9, lin-35, lin-37, lin-52, lin-53, lin-54- dpl-1 and efl-1. Interacts with hcp-3.

The protein localises to the nucleus. Its subcellular location is the chromosome. It localises to the centromere. In terms of biological role, core histone-binding subunit that may target chromatin assembly factors, chromatin remodeling factors and histone deacetylases to their histone substrates in a manner that is regulated by nucleosomal DNA. Required for hcp-3 and his-1 stabilization, localization of hcp-3 to centromeres and for proper chromosome segregation. Synthetic multivulva class B (synMuvB) protein. SynMuvB proteins are required to repress the induction of vulval development by Ras signaling and probably act by forming the multiprotein DRM complex that represses transcription. The sequence is that of Probable histone-binding protein lin-53 from Caenorhabditis briggsae.